Here is a 99-residue protein sequence, read N- to C-terminus: Large ribosomal subunit protein bL21 (99 aa).

It belongs to the bacterial ribosomal protein bL21 family. As to quaternary structure, part of the 50S ribosomal subunit. Contacts protein L20.

Functionally, this protein binds to 23S rRNA in the presence of protein L20. The chain is Large ribosomal subunit protein bL21 from Acholeplasma laidlawii (strain PG-8A).